The primary structure comprises 5376 residues: Zonadhesin (5376 aa).

Positions 1–17 (MALPVWTLMLLVGAAWG) are cleaved as a signal peptide. The Extracellular portion of the chain corresponds to 18–5310 (QEQVPAWRPN…TTRKKIEASS (5293 aa)). MAM domains lie at 45–210 (SKCD…TCNQ), 215–374 (QMCT…PCGE), and 377–542 (PQCD…PCRV). N-linked (GlcNAc...) asparagine glycans are attached at residues N339 and N499. Residues 547 to 1170 (EIPSSPLLPP…PTTGVSTTES (624 aa)) form an 80 X heptapeptide repeats (approximate) (mucin-like domain) region. 2 disordered regions span residues 553–579 (LLPP…TKAT) and 1037–1113 (TVPP…TVST). Residues 1052–1113 (TEVTTTPPEE…IASEETTVST (62 aa)) are compositionally biased toward low complexity. A TIL 1 domain is found at 1171–1220 (CPPNAHIELCACPASCESPKPSCQPPCIPGCVCNPGFLFSNNQCINESSC). 3 N-linked (GlcNAc...) asparagine glycosylation sites follow: N1216, N1239, and N1314. Residues 1227-1275 (KHYKPGEEWFTPNCTERCRCLPGSLMECQISQCGTHTVCQLKSDQYQCE) form the VWFC 1 domain. The VWFD 1 domain occupies 1280 to 1462 (ATCLVYGDLH…DKDWVSSRCQ (183 aa)). 2 disulfides stabilise this stretch: C1282–C1417 and C1304–C1461. The 54-residue stretch at 1555 to 1608 (CPKNSRYSLCAKPCPETCHPISTTQHCSDKCVEGCECDPGFILSGSECVPSSQC) folds into the TIL 2 domain. One can recognise a VWFC 2 domain in the interval 1609–1664 (GCTSFQGRYFKLQEQWFNPDCKEICTCESHNHILCKPWKCKAQEACSYKNGVLGCH). In terms of domain architecture, VWFD 2 spans 1669-1849 (ATCMVSGDPH…ILEASDPGCF (181 aa)). 2 disulfide bridges follow: C1671-C1809 and C1693-C1848. Residues N1814, N1908, and N1933 are each glycosylated (N-linked (GlcNAc...) asparagine). The TIL 3 domain maps to 1941-1995 (CPPRSSYNPCANSCPATCLTLSTPRDCPTLPCVEGCECQSGHILSGTTCVPLRQC). One can recognise a VWFC 3 domain in the interval 1996 to 2052 (GCSDQDGSYHLLGESWYTEKTCTTLCTCSAHSNITCSPTACKANHVCLRQEGLLRCA). Residues N2028, N2111, N2142, and N2332 are each glycosylated (N-linked (GlcNAc...) asparagine). Residues 2056–2239 (GECRISEDSQ…KDKSMDPNCQ (184 aa)) form the VWFD 3 domain. Cystine bridges form between C2058–C2200 and C2080–C2238. In terms of domain architecture, TIL 4 spans 2340–2398 (CPAHSHYTNCLPSCPPSCLDPDSRCEGSGHKVPATCREGCICQPDYVLLNDKCVLRSHC). The VWFC 4 domain maps to 2399-2454 (GCKDAQGVFIPAGKTWISEDCTQSCTCMKGSMRCWDFQCPPGTYCKNSNDGSSNCV). A TIL 5 domain is found at 2460-2518 (CPAHSKFTDCLPPCHPSCSDPDGHCEGISTNAHSNCKEGCVCQPGYVLRNDKCVLRIEC). The VWFC 5 domain maps to 2519–2574 (GCQHTQGGFIPAGKNWTSRGCSQSCDCMEGVIRCQNFQCPSGTYCQDIEDGTSNCA). N2533 and N2575 each carry an N-linked (GlcNAc...) asparagine glycan. The 59-residue stretch at 2580–2638 (CPAHSSFTNCLPPCQPSCSDPEGHCGGSTTKAPSACQEGCVCEPDYVVLNNKCVPRIEC) folds into the TIL 6 domain. In terms of domain architecture, VWFC 6 spans 2639–2694 (GCKDAQGVLIPADKIWINKGCTQTCACVTGTIHCRDFQCPSGTYCKDIKDDASNCT). The N-linked (GlcNAc...) asparagine glycan is linked to N2692. The region spanning 2700–2758 (CPDHSLYTHCLPSCLLSCSDPDGLCRGTSPEAPSTCKEGCVCDPDYVLSNDKCVLRIEC) is the TIL 7 domain. Positions 2759–2814 (GCKDAQGVLIPAGKTWINRGCTQSCSCMGGAIQCQNFKCPSEAYCQDMEDGNSNCT) constitute a VWFC 7 domain. N2812 carries N-linked (GlcNAc...) asparagine glycosylation. A TIL 8 domain is found at 2820-2878 (CPAHSHYTNCLPTCQPSCSDPDGHCEGSSTKAPSACKEGCVCEPDYVMLNNKCVPRIEC). Residues 2879–2934 (GCKDTQGVLIPADKTWINRGCTQSCTCRGGAIQCQKYHCSSGTYCKDMEDDSSSCA) enclose the VWFC 8 domain. The TIL 9 domain occupies 2940–2998 (CPAHSHFTNCLPPCQPSCLDSEGHCEGSTTKAPSACQEGCVCEPDYVVLNNKCVPRIEC). Residues 2999 to 3054 (GCKDAQGVLIPADKTWINRGCTQSCTCKGGAIQCQKFQCPSETYCKDIEDGNSNCT) enclose the VWFC 9 domain. N-linked (GlcNAc...) asparagine glycosylation is found at N3052, N3065, N3144, and N3172. One can recognise a TIL 10 domain in the interval 3060–3118 (CPANSNFTSCLPSCQPSCSNTDVHCEGSSPNTLSSCREGCVCQSGYVLHNDKCILRNQC). The 56-residue stretch at 3119–3174 (GCKDAQGALIPEGKTWITSGCTQSCNCTGGAIQCQNFQCPLKTYCKDLKDGSSNCT) folds into the VWFC 10 domain. Residues 3180–3238 (CPAHSRYTNCLPSCPPLCLDPEGLCEGTSPKVPSTCREGCICQPGYLMHKNKCVLRIFC) enclose the TIL 11 domain. One can recognise a VWFC 11 domain in the interval 3239–3294 (GCKNTQGAFISADKTWISRGCTQSCTCPAGAIHCRNFKCPSGTYCKNGDNGSSNCT). N-linked (GlcNAc...) asparagine glycosylation is found at N3288 and N3292. The 56-residue stretch at 3300-3355 (CPTNSQFTDCLPSCVPSCSNRCEVTSPSVPSSCREGCLCNHGFVFSEDKCVPRTQC) folds into the TIL 12 domain. Residues 3356-3411 (GCKDARGAIIPAGKTWTSKGCTQSCACVEGNIQCQNFQCPPETYCKDNSEGSSTCT) enclose the VWFC 12 domain. Residues 3417-3475 (CPAHTQYTSCLPSCLPSCLDPEGLCKDISPKVPSTCKEGCVCQSGYVLNSDKCVLRAEC) enclose the TIL 13 domain. The VWFC 13 domain maps to 3476-3531 (DCKDAQGALIPAGKTWTSPGCTQSCACMGGAVQCQSSQCPPGTYCKDNEDGNSNCA). The TIL 14 domain occupies 3537–3595 (CPAHSLFTNCLPPCLPSCLDPDGLCKGASPKVPSTCKEGCICQSGYVLSNNKCLLRNRC). One can recognise a VWFC 14 domain in the interval 3596–3651 (GCKDAHGALIPEDKTWVSRGCTQSCVCTGGSIQCLSSQCPPGAYCKDNEDGSSNCA). The 59-residue stretch at 3657–3715 (CPANSHYTDCFPPCPPSCSDPEGHCEASGPRVLSTCREGCLCNPGFVLDRDKCVPRVEC) folds into the TIL 15 domain. The VWFC 15 domain occupies 3716–3771 (GCKDAQGALIPSGKTWTSPGCTQSCACMGGVVQCQSSQCPPGTYCKDNEDGNSNCA). Positions 3777–3835 (CPTHSNYTDCLPFCLPSCLDPSALCGGTSPKGPSTCKEGCVCQPGYVLDKDKCILKIEC) constitute a TIL 16 domain. The N-linked (GlcNAc...) asparagine glycan is linked to N3782. Positions 3836-3891 (GCRDTQGAVIPAGKTWLSTGCIQSCACVEGTIQCQNFQCPPGTYCNHNNNCAKIPL) constitute a VWFC 16 domain. The region spanning 3893–3951 (CPAHSHFTSCLPSCPPSCANLDGSCEQTSPKVPSTCKEGCLCQPGYFLNNGKCVLQTHC) is the TIL 17 domain. One can recognise a VWFC 17 domain in the interval 3952-4007 (DCKDAEGGLVPAGKTWTSKDCTQSCACTGGAVQCQNFQCPLGTYCKDSGDGSSNCT). A glycan (N-linked (GlcNAc...) asparagine) is linked at N4005. A TIL 18 domain is found at 4029–4087 (CPAHSHFTSCLPSCPPSCSNLDGSCVESNFKAPSVCKKGCICQPGYLLNNDKCVLRIQC). The 56-residue stretch at 4088-4143 (GCKDTQGGLIPAGRTWISSDCTKSCSCMGGIIQCRDFQCPPGTYCKESNDSSRTCA) folds into the VWFC 18 domain. N4136 carries an N-linked (GlcNAc...) asparagine glycan. The TIL 19 domain maps to 4149–4207 (CPAHSHYTNCLPACSRSCTDLDGHCEGTSPKVPSPCKEGCLCQPGYVVHNHKCVLQIHC). The 55-residue stretch at 4208-4262 (GCKDAQGGFVPAGKTWISRGCTQSCACVGGAVQCHNFTCPTGTQCQNSSCSKITV) folds into the VWFC 19 domain. N-linked (GlcNAc...) asparagine glycosylation is found at N4243 and N4254. Residues 4264 to 4322 (CPAHSQYTTCLPSCLPSCFDPEGLCGGASPRAPSTCREGCVCEADYVLREDKCVLRTQC) form the TIL 20 domain. In terms of domain architecture, VWFC 20 spans 4323–4378 (GCKDAQGDLIPANKTWLTRGCAQKCTCKGGNIHCWNFKCPLGTECKDSVDGGSNCT). N4335 and N4376 each carry an N-linked (GlcNAc...) asparagine glycan. The region spanning 4384–4442 (CPAHSHHTYCLPSCIPSCSNVNDRCESTSLQRPSTCIEGCLCHSGFVFSKDKCVPRTQC) is the TIL 21 domain. Residues 4443 to 4498 (GCKDSQGTLIPAGKNWITTGCSQRCTCTGGLVQCHDFQCPSGAECQDIEDGNSNCV) enclose the VWFC 21 domain. The TIL 22 domain occupies 4504–4562 (CPAHSHYSKCLPPCQPSCSDPDGHCEGTSPEAPSTCEEGCVCEPDYVLSNDKCVPSSEC). The VWFC 22 domain maps to 4563–4618 (GCKDAHGVLIPESKTWVSRGCTKNCTCKGGTVQCHDFSCPTGSRCLDNNEGNSNCV). An N-linked (GlcNAc...) asparagine glycan is attached at N4586. One can recognise a TIL 23 domain in the interval 4624–4682 (CPAHSLYTNCLPSCLPSCSDPEGLCGGTSPEVPSTCKEGCICQSGYVLHKNKCMLRIHC). In terms of domain architecture, VWFC 23 spans 4683 to 4738 (DCKDFQGSLIKTGQTWISSGCSKICTCKGGFFQCQSYKCPSGTQCEESEDGSSNCV). The TIL 24 domain occupies 4744–4802 (CPANSLYTHCLPTCLPSCSNPDGRCEGTSHKAPSTCREGCVCQPGYLLNKDTCVHKNQC). The VWFC 24 domain maps to 4803–4858 (GCKDIRGNIIPAGNTWISSDCTQSCACTDGVIQCQNFVCPSGSHCQYNEDGSSDCA). Positions 4863-5038 (ERCTIFGDPY…SWEVKAQHAF (176 aa)) constitute a VWFD 4 domain. C4865 and C5001 are joined by a disulfide. N-linked (GlcNAc...) asparagine glycosylation is present at N5136. The TIL 25 domain occupies 5150–5203 (CPANTVYQRCMTPCPASCAKFVTPKVCEGPCVEGCASLPGYIYSDTQSLPVTHC). One can recognise a VWFC 25 domain in the interval 5204 to 5258 (GCTADGIYYKLGDSFVTNDCSQHCTCASQGILLCEPYGCRAGESCMVANFTRGCF). N-linked (GlcNAc...) asparagine glycosylation occurs at N5252. One can recognise an EGF-like domain in the interval 5259–5295 (QDSPCLQNPCHNDGRCEEQGATFICHCDFGYGGEFCT). Cystine bridges form between C5263/C5274, C5268/C5283, and C5285/C5294. Residues 5311 to 5337 (LVAILPGVLVMVLVPVLLPRVYVYMAT) traverse the membrane as a helical segment. Residues 5338-5376 (RTTMGRRRMKRKEKKLLRQSRLRLEDADVPEPTFKATEF) are Cytoplasmic-facing.

In terms of assembly, probably forms covalent oligomers. In terms of tissue distribution, in testis, primarily in haploid spermatids.

It localises to the cell membrane. Binds in a species-specific manner to the zona pellucida of the egg. May be involved in gamete recognition and/or signaling. This Mus musculus (Mouse) protein is Zonadhesin (Zan).